The following is a 407-amino-acid chain: Substance-P receptor (407 aa).

The Extracellular portion of the chain corresponds to 1 to 31 (MDNVLPMDSDLFPNISTNTSESNQFVQPTWQ). 2 N-linked (GlcNAc...) asparagine glycosylation sites follow: Asn-14 and Asn-18. Residues 32–54 (IVLWAAAYTVIVVTSVVGNVVVI) traverse the membrane as a helical segment. Residues 55 to 64 (WIILAHKRMR) lie on the Cytoplasmic side of the membrane. The chain crosses the membrane as a helical span at residues 65 to 86 (TVTNYFLVNLAFAEACMAAFNT). Topologically, residues 87-106 (VVNFTYAVHNVWYYGLFYCK) are extracellular. Cys-105 and Cys-180 are disulfide-bonded. Residues 107–128 (FHNFFPIAALFASIYSMTAVAF) traverse the membrane as a helical segment. The Cytoplasmic portion of the chain corresponds to 129–148 (DRYMAIIHPLQPRLSATATK). Residues 149-169 (VVIFVIWVLALLLAFPQGYYS) traverse the membrane as a helical segment. The Extracellular portion of the chain corresponds to 170 to 194 (TTETMPSRVVCMIEWPEHPNRTYEK). The helical transmembrane segment at 195–219 (AYHICVTVLIYFLPLLVIGYAYTVV) threads the bilayer. At 220 to 248 (GITLWASEIPGDSSDRYHEQVSAKRKVVK) the chain is on the cytoplasmic side. Residues 249-270 (MMIVVVCTFAICWLPFHVFFLL) form a helical membrane-spanning segment. Topologically, residues 271–283 (PYINPDLYLKKFI) are extracellular. The helical transmembrane segment at 284–308 (QQVYLASMWLAMSSTMYNPIIYCCL) threads the bilayer. Residues 309–407 (NDRFRLGFKH…SSSFYSNMLA (99 aa)) are Cytoplasmic-facing. A lipid anchor (S-palmitoyl cysteine) is attached at Cys-322. Positions 362–407 (VGAHEEEPEEGPKATPSSLDLTSNGSSRSNSKTMTESSSFYSNMLA) are disordered. Positions 376–407 (TPSSLDLTSNGSSRSNSKTMTESSSFYSNMLA) are enriched in polar residues.

Belongs to the G-protein coupled receptor 1 family. As to quaternary structure, interacts with ARRB1.

It localises to the cell membrane. Its function is as follows. This is a receptor for the tachykinin neuropeptide substance P. It is probably associated with G proteins that activate a phosphatidylinositol-calcium second messenger system. The rank order of affinity of this receptor to tachykinins is: substance P &gt; substance K &gt; neuromedin-K. The polypeptide is Substance-P receptor (Tacr1) (Rattus norvegicus (Rat)).